The chain runs to 500 residues: Sulfate adenylyltransferase (500 aa).

The segment at 1 to 165 (MLSPHGGILQ…LEAIQLPAHY (165 aa)) is N-terminal. The catalytic stretch occupies residues 166–390 (DYLNLRKSPA…LRQYNPPRYR (225 aa)). Glutamine 193 contacts sulfate. ATP contacts are provided by residues 193–196 (QTRN) and 287–290 (GRDH). Active-site residues include threonine 194, arginine 195, and asparagine 196. Residue arginine 195 coordinates sulfate. Alanine 291 provides a ligand contact to sulfate. Isoleucine 329 provides a ligand contact to ATP. The required for oligomerization; adenylyl-sulfate kinase-like stretch occupies residues 391–500 (QGFVIVVNHE…FLEDNKFFQF (110 aa)).

This sequence belongs to the sulfate adenylyltransferase family. As to quaternary structure, homohexamer. Dimer of trimers.

Its subcellular location is the cytoplasm. The catalysed reaction is sulfate + ATP + H(+) = adenosine 5'-phosphosulfate + diphosphate. It participates in sulfur metabolism; hydrogen sulfide biosynthesis; sulfite from sulfate: step 1/3. Catalyzes the first intracellular reaction of sulfate assimilation, forming adenosine-5'-phosphosulfate (APS) from inorganic sulfate and ATP. Plays an important role in sulfate activation as a component of the biosynthesis pathway of sulfur-containing amino acids. This Eremothecium gossypii (strain ATCC 10895 / CBS 109.51 / FGSC 9923 / NRRL Y-1056) (Yeast) protein is Sulfate adenylyltransferase.